Reading from the N-terminus, the 514-residue chain is Antiseptic resistance protein (514 aa).

Residues 1–23 are Cytoplasmic-facing; it reads MISFFTKTTDMMTSKKRWTALVV. The helical transmembrane segment at 24-41 threads the bilayer; sequence LAVSLFVVTMDMTILIMA. Over 42–57 the chain is Extracellular; sequence LPELVRELEPSGTQQL. Residues 58 to 75 form a helical membrane-spanning segment; that stretch reads WIVDIYSLVLAGFIIPLS. At 76 to 86 the chain is on the cytoplasmic side; it reads AFADKWGRKKA. The chain crosses the membrane as a helical span at residues 87-104; the sequence is LLTGFALFGLVSLAIFFA. Over 105 to 112 the chain is Extracellular; that stretch reads ESAEFVIA. The helical transmembrane segment at 113–130 threads the bilayer; the sequence is IRFLLGIAGALIMPTTLS. At 131–146 the chain is on the cytoplasmic side; sequence MIRVIFENPKERATAL. Residues 147 to 164 traverse the membrane as a helical segment; the sequence is AVWSIASSIGAVFGPIIG. The Extracellular portion of the chain corresponds to 165-172; it reads GALLEQFS. A helical transmembrane segment spans residues 173–190; it reads WHSAFLINVPFAIIAVVA. The Cytoplasmic portion of the chain corresponds to 191–207; the sequence is GLFLLPESKLSKEKSHS. A helical transmembrane segment spans residues 208–225; the sequence is WDIPSTILSIAGMIGLVW. Residues 226-237 are Extracellular-facing; that stretch reads SIKEFSKEGLAD. Residues 238 to 255 traverse the membrane as a helical segment; it reads IIPWVVIVLAITMIVIFV. Residues 256 to 278 lie on the Cytoplasmic side of the membrane; the sequence is KRNLSSSDPMLDVRLFKKRSFSA. A helical membrane pass occupies residues 279 to 295; the sequence is GTIAAFMTMFAMASVLL. The Extracellular portion of the chain corresponds to 296 to 315; sequence LASQWLQVVEELSPFKAGLY. Residues 316–333 traverse the membrane as a helical segment; that stretch reads LLPMAIGDMVFAPIAPGL. Residues 334–341 are Cytoplasmic-facing; it reads AARFGPKI. A helical transmembrane segment spans residues 342–360; sequence VLPSGIGIAAIGMFIMYFF. At 361–369 the chain is on the extracellular side; the sequence is GHPLSYSTM. Residues 370–387 traverse the membrane as a helical segment; that stretch reads ALALILVGAGMASLAVAS. Residues 388–408 lie on the Cytoplasmic side of the membrane; the sequence is ALIMLETPTSKAGNAAAVEES. Residues 409–426 traverse the membrane as a helical segment; that stretch reads MYDLGNVFGVAVLGSLSS. The Extracellular segment spans residues 427 to 481; sequence MLYRVFLDISSFSSKGIVGDLAHVAEESVVGAVEVAKATGIKQLANEAVTSFNDA. Residues 482-499 form a helical membrane-spanning segment; the sequence is FVATALVGGIIMIIISIV. The Cytoplasmic segment spans residues 500–514; the sequence is VYLLIPKSLDITKQK.

This sequence belongs to the major facilitator superfamily.

Its subcellular location is the cell membrane. Its function is as follows. Confers export-mediated resistance against antiseptic and disinfectant compounds such as intercalating dyes, quaternary ammonium salts and diamidines. The chain is Antiseptic resistance protein (qacA) from Staphylococcus aureus (strain Mu50 / ATCC 700699).